Here is a 292-residue protein sequence, read N- to C-terminus: Acetyl-coenzyme A carboxylase carboxyl transferase subunit beta (292 aa).

In terms of domain architecture, CoA carboxyltransferase N-terminal spans 36–292; sequence MWSKCEKCAK…LLRMHEVDYE (257 aa). Zn(2+)-binding residues include cysteine 40, cysteine 43, cysteine 59, and cysteine 62. Residues 40 to 62 form a C4-type zinc finger; that stretch reads CEKCAKILYTEDLRENFNVCPNC.

The protein belongs to the AccD/PCCB family. In terms of assembly, acetyl-CoA carboxylase is a heterohexamer composed of biotin carboxyl carrier protein (AccB), biotin carboxylase (AccC) and two subunits each of ACCase subunit alpha (AccA) and ACCase subunit beta (AccD). It depends on Zn(2+) as a cofactor.

The protein resides in the cytoplasm. The enzyme catalyses N(6)-carboxybiotinyl-L-lysyl-[protein] + acetyl-CoA = N(6)-biotinyl-L-lysyl-[protein] + malonyl-CoA. Its pathway is lipid metabolism; malonyl-CoA biosynthesis; malonyl-CoA from acetyl-CoA: step 1/1. Its function is as follows. Component of the acetyl coenzyme A carboxylase (ACC) complex. Biotin carboxylase (BC) catalyzes the carboxylation of biotin on its carrier protein (BCCP) and then the CO(2) group is transferred by the transcarboxylase to acetyl-CoA to form malonyl-CoA. The sequence is that of Acetyl-coenzyme A carboxylase carboxyl transferase subunit beta from Clostridium perfringens (strain ATCC 13124 / DSM 756 / JCM 1290 / NCIMB 6125 / NCTC 8237 / Type A).